Reading from the N-terminus, the 310-residue chain is ADP-L-glycero-D-manno-heptose-6-epimerase (310 aa).

Residues 10-11 (FI), 31-32 (DN), Lys-38, Lys-53, 75-79 (EGACS), and Asn-92 each bind NADP(+). The Proton acceptor role is filled by Tyr-140. Lys-144 contributes to the NADP(+) binding site. Residue Asn-169 coordinates substrate. NADP(+) is bound by residues Val-170 and Lys-178. Residue Lys-178 is the Proton acceptor of the active site. Substrate-binding positions include Ser-180, His-187, 201-204 (FEGS), and Arg-209. Lys-267 carries the N6-acetyllysine modification. Tyr-272 is a binding site for substrate.

The protein belongs to the NAD(P)-dependent epimerase/dehydratase family. HldD subfamily. As to quaternary structure, homopentamer. Requires NADP(+) as cofactor.

The enzyme catalyses ADP-D-glycero-beta-D-manno-heptose = ADP-L-glycero-beta-D-manno-heptose. It participates in nucleotide-sugar biosynthesis; ADP-L-glycero-beta-D-manno-heptose biosynthesis; ADP-L-glycero-beta-D-manno-heptose from D-glycero-beta-D-manno-heptose 7-phosphate: step 4/4. Functionally, catalyzes the interconversion between ADP-D-glycero-beta-D-manno-heptose and ADP-L-glycero-beta-D-manno-heptose via an epimerization at carbon 6 of the heptose. The polypeptide is ADP-L-glycero-D-manno-heptose-6-epimerase (Escherichia coli (strain SMS-3-5 / SECEC)).